The following is a 71-amino-acid chain: Beta-defensin 124 (71 aa).

Residues 1-22 (MTQLLLFLVALLVLGHVPSGRS) form the signal peptide. Disulfide bonds link Cys-27–Cys-54, Cys-34–Cys-48, and Cys-38–Cys-55.

The protein belongs to the beta-defensin family.

Its subcellular location is the secreted. Has antibacterial activity. The chain is Beta-defensin 124 (DEFB124) from Homo sapiens (Human).